The primary structure comprises 201 residues: Ribosome maturation factor RimP (201 aa).

Residues 180-201 (LRRGSAPAQDEEGEDEAPGAPL) form a disordered region. The span at 188-201 (QDEEGEDEAPGAPL) shows a compositional bias: acidic residues.

Belongs to the RimP family.

It localises to the cytoplasm. Functionally, required for maturation of 30S ribosomal subunits. The polypeptide is Ribosome maturation factor RimP (Methylobacterium sp. (strain 4-46)).